We begin with the raw amino-acid sequence, 413 residues long: Serine hydroxymethyltransferase (413 aa).

Residues leucine 119 and 123-125 (GHL) contribute to the (6S)-5,6,7,8-tetrahydrofolate site. N6-(pyridoxal phosphate)lysine is present on lysine 228. 351–353 (SPF) is a binding site for (6S)-5,6,7,8-tetrahydrofolate.

It belongs to the SHMT family. Homodimer. Requires pyridoxal 5'-phosphate as cofactor.

Its subcellular location is the cytoplasm. The catalysed reaction is (6R)-5,10-methylene-5,6,7,8-tetrahydrofolate + glycine + H2O = (6S)-5,6,7,8-tetrahydrofolate + L-serine. It functions in the pathway one-carbon metabolism; tetrahydrofolate interconversion. Its pathway is amino-acid biosynthesis; glycine biosynthesis; glycine from L-serine: step 1/1. Functionally, catalyzes the reversible interconversion of serine and glycine with tetrahydrofolate (THF) serving as the one-carbon carrier. This reaction serves as the major source of one-carbon groups required for the biosynthesis of purines, thymidylate, methionine, and other important biomolecules. Also exhibits THF-independent aldolase activity toward beta-hydroxyamino acids, producing glycine and aldehydes, via a retro-aldol mechanism. This Clostridium botulinum (strain Langeland / NCTC 10281 / Type F) protein is Serine hydroxymethyltransferase.